The primary structure comprises 420 residues: MSNGVTAPLARHAMAYVLAGGRGSRLMELTDRRAKPAVYFGGKSRIIDFALSNALNSGIRRIAVATQYKAHSLIRHLQRGWNFFRPERNESFDILPASQRVSDDMWYRGTADAVYQNIDIIESYDPKFIVLLAGDHVYKMDYEKMLQQHVEQGADVTVGCLEVARSEATAFGVMHVDAKDVIQSFLEKPADPPAMPGKPDRALVSMGIYVFDTKFLIEELHRDAANPNSSHDFGKDIIPYIVQHGKAVAHHFDKSCRRSHAEDTSYWRDAGTVDAYWAANIDLTDIVPQLDLYDREWPIWTYGEITPPAKFVHDKDGRRGEAVSSLVSGGCIISGAALRHTLLFTGVRVHSYSQVEGAVILPYADIARSCRLKNVVVDAEVRIPDGLVVGEDPELDARRFRRTDSGICLITQPMIDRLDQ.

Alpha-D-glucose 1-phosphate-binding positions include Tyr-107, Gly-172, 187–188 (EK), and Ser-205.

Belongs to the bacterial/plant glucose-1-phosphate adenylyltransferase family. As to quaternary structure, homotetramer.

It catalyses the reaction alpha-D-glucose 1-phosphate + ATP + H(+) = ADP-alpha-D-glucose + diphosphate. Its pathway is glycan biosynthesis; glycogen biosynthesis. Functionally, involved in the biosynthesis of ADP-glucose, a building block required for the elongation reactions to produce glycogen. Catalyzes the reaction between ATP and alpha-D-glucose 1-phosphate (G1P) to produce pyrophosphate and ADP-Glc. This is Glucose-1-phosphate adenylyltransferase from Rhodopseudomonas palustris (strain HaA2).